The primary structure comprises 136 residues: 5-hydroxyisourate hydrolase (136 aa).

Positions 1-20 are cleaved as a signal peptide; that stretch reads MKRYILATAIASLVAAPAMA. Substrate-binding residues include H31, R69, and Y133.

The protein belongs to the transthyretin family. 5-hydroxyisourate hydrolase subfamily. As to quaternary structure, homotetramer.

The protein localises to the periplasm. The enzyme catalyses 5-hydroxyisourate + H2O = 5-hydroxy-2-oxo-4-ureido-2,5-dihydro-1H-imidazole-5-carboxylate + H(+). Catalyzes the hydrolysis of 5-hydroxyisourate (HIU) to 2-oxo-4-hydroxy-4-carboxy-5-ureidoimidazoline (OHCU). The protein is 5-hydroxyisourate hydrolase (hiuH) of Salmonella typhi.